Reading from the N-terminus, the 337-residue chain is Transcription initiation factor IIB (337 aa).

A TFIIB-type zinc finger spans residues 36 to 68 (SVQSVCPECGSRQLVHDYERAELVCQNCGLVLD). Zn(2+) contacts are provided by Cys41, Cys44, Cys60, and Cys63. Repeat copies occupy residues 154–237 (SELD…SREL) and 248–329 (DYVP…ELAE).

This sequence belongs to the TFIIB family.

Functionally, stabilizes TBP binding to an archaeal box-A promoter. Also responsible for recruiting RNA polymerase II to the pre-initiation complex (DNA-TBP-TFIIB). This Methanoculleus marisnigri (strain ATCC 35101 / DSM 1498 / JR1) protein is Transcription initiation factor IIB.